We begin with the raw amino-acid sequence, 595 residues long: UvrABC system protein C (595 aa).

A GIY-YIG domain is found at 17 to 94 (IEPGCYLMKD…IKQYQPRYNI (78 aa)). Positions 199–234 (KTILHNLEQKMQESSESLDFERAKEYRDLIQHIHNL) constitute a UVR domain.

It belongs to the UvrC family. As to quaternary structure, interacts with UvrB in an incision complex.

The protein resides in the cytoplasm. Functionally, the UvrABC repair system catalyzes the recognition and processing of DNA lesions. UvrC both incises the 5' and 3' sides of the lesion. The N-terminal half is responsible for the 3' incision and the C-terminal half is responsible for the 5' incision. This chain is UvrABC system protein C, found in Staphylococcus saprophyticus subsp. saprophyticus (strain ATCC 15305 / DSM 20229 / NCIMB 8711 / NCTC 7292 / S-41).